A 322-amino-acid chain; its full sequence is DNA repair and recombination protein RadA (322 aa).

Position 105–112 (105–112 (GMFGSGKT)) interacts with ATP.

This sequence belongs to the eukaryotic RecA-like protein family.

Functionally, involved in DNA repair and in homologous recombination. Binds and assemble on single-stranded DNA to form a nucleoprotein filament. Hydrolyzes ATP in a ssDNA-dependent manner and promotes DNA strand exchange between homologous DNA molecules. The sequence is that of DNA repair and recombination protein RadA from Methanococcus maripaludis (strain DSM 14266 / JCM 13030 / NBRC 101832 / S2 / LL).